The sequence spans 373 residues: Response regulator aspartate phosphatase J (373 aa).

TPR repeat units lie at residues 99-135 (YYFY…VEDE) and 146-179 (AEVY…GRRR). L-glutamyl-L-arginyl-glycyl-L-methionyl-L-threonine contacts are provided by Glu147, Tyr150, Gln181, Asp192, Tyr217, Asn225, His228, Gln260, Tyr297, Lys300, and Asp335. 2 TPR repeats span residues 220-253 (AAAY…FEEH) and 259-292 (VQAV…AAEW). One copy of the TPR 5 repeat lies at 334-367 (EDLLHDTAERFNQLEHYESAAFFYRRLMNIKKKL).

Belongs to the Rap family. In terms of assembly, monomer in solution. Homodimer.

The protein localises to the cytoplasm. Its activity is regulated as follows. Inhibited in vitro by the competence and sporulation stimulating factor (CSF), encoded by phrC. However, CSF has at least three targets (RapB, RapC, and RapJ) and the physiological importance of RapJ inhibition by CSF is unknown. Interaction with CSF induces a conformational change in RapJ. Involved in the regulation of sporulation. Acts as a phosphatase that specifically dephosphorylates the sporulation initiation phosphotransferase Spo0F and inhibits its activity. The polypeptide is Response regulator aspartate phosphatase J (rapJ) (Bacillus subtilis (strain 168)).